We begin with the raw amino-acid sequence, 118 residues long: Large ribosomal subunit protein bL20 (118 aa).

It belongs to the bacterial ribosomal protein bL20 family.

Its function is as follows. Binds directly to 23S ribosomal RNA and is necessary for the in vitro assembly process of the 50S ribosomal subunit. It is not involved in the protein synthesizing functions of that subunit. This chain is Large ribosomal subunit protein bL20, found in Cupriavidus metallidurans (strain ATCC 43123 / DSM 2839 / NBRC 102507 / CH34) (Ralstonia metallidurans).